The primary structure comprises 187 residues: Peptide deformylase 1 (187 aa).

Cysteine 107 and histidine 149 together coordinate Fe cation. Glutamate 150 is a catalytic residue. Histidine 153 lines the Fe cation pocket.

Belongs to the polypeptide deformylase family. It depends on Fe(2+) as a cofactor.

It catalyses the reaction N-terminal N-formyl-L-methionyl-[peptide] + H2O = N-terminal L-methionyl-[peptide] + formate. Removes the formyl group from the N-terminal Met of newly synthesized proteins. Requires at least a dipeptide for an efficient rate of reaction. N-terminal L-methionine is a prerequisite for activity but the enzyme has broad specificity at other positions. This chain is Peptide deformylase 1, found in Nostoc sp. (strain PCC 7120 / SAG 25.82 / UTEX 2576).